Here is a 751-residue protein sequence, read N- to C-terminus: MNINDITIPFQVDLSNCSKEPIHIPGLIQPHGVLLVLQEVDLTILQVSNNTFNILGRHPEQLLNQHLSCLLEAEQLSLLKDCLAQEDLQIINPLEFIIKSHNESISFDVIAHRSNNLLILELEANLSDKTHSFFRFYHLVKLAMLKLQGTATTTEISQILAQEVRKITGFDRVMVYRFDEQWNGKVIAEVKPEYLTSYLGLNYPASDIPQQARKLYSQNWLRLIPDAKYQPVPIVPINNPLNDQPLDLSRSVLRSVSPLHIEYMQNMGVTASMSISIMKNQKLWGLIACHHQSPKYIPYEIRSACEFLGQMTSVEMSAKEDSEDTEDKIQVKSVHSKLVQYMSAENDFINALIDHQPNILDLVKAQGAAVCFNGNSCTVGQVPPMPDIQVLVEWMSQNIHEEIFATDSLATVYPDAEKLRDVASGLIALSISRSQKNYILWFRPEVVRTVDWGGNPHKPVEVIANGEIRLSPRKSFDLWKETVLLKSQPWKSHEVNAALELRSAIIGIVLQKADELAQLNIELERSNQELDAFAYIASHDLKEPLRGIHNYSNFLMEDYGEIIDAPGKEKLLTLIRLTQRMEDLIDSLLHFSRLGRVDLSMQDTDLNEIVHRILDMLSGRIEETGVEIRILQLLPVVYCDRIQIGEVFSNLIANSIKYNDKANKWIEIGYIDNPPLPPTFYVRDNGIGIREKHFETIFRIFKRLHSPSKYGGGTGAGLTIAKKIVERHGGKIWVESTYGEGSTFYFTLQDV.

C17 provides a ligand contact to a tetrapyrrole. The chromophore binding domain stretch occupies residues 22–511 (IHIPGLIQPH…RSAIIGIVLQ (490 aa)). Residues 152 to 320 (TTTEISQILA…MTSVEMSAKE (169 aa)) form the GAF domain. Positions 536 to 751 (IASHDLKEPL…STFYFTLQDV (216 aa)) constitute a Histidine kinase domain. H539 is modified (phosphohistidine; by autocatalysis).

It in the N-terminal section; belongs to the phytochrome family. Post-translationally, contains one covalently linked tetrapyrrole chromophore.

It carries out the reaction ATP + protein L-histidine = ADP + protein N-phospho-L-histidine.. Functionally, photoreceptor which exists in two forms that are reversibly interconvertible by light: the R form that absorbs maximally in the red region of the spectrum and the FR form that absorbs maximally in the far-red region. The protein is Cyanobacterial phytochrome B (bphB) of Nostoc sp. (strain PCC 7120 / SAG 25.82 / UTEX 2576).